We begin with the raw amino-acid sequence, 114 residues long: UPF0342 protein NT01CX_2274 (114 aa).

It belongs to the UPF0342 family.

This Clostridium novyi (strain NT) protein is UPF0342 protein NT01CX_2274.